Reading from the N-terminus, the 446-residue chain is Phosphoglucosamine mutase (446 aa).

The active-site Phosphoserine intermediate is Ser-102. Residues Ser-102, Asp-239, Asp-241, and Asp-243 each contribute to the Mg(2+) site. Ser-102 carries the phosphoserine modification.

The protein belongs to the phosphohexose mutase family. Requires Mg(2+) as cofactor. Post-translationally, activated by phosphorylation.

It carries out the reaction alpha-D-glucosamine 1-phosphate = D-glucosamine 6-phosphate. Its function is as follows. Catalyzes the conversion of glucosamine-6-phosphate to glucosamine-1-phosphate. The protein is Phosphoglucosamine mutase of Solibacter usitatus (strain Ellin6076).